A 302-amino-acid polypeptide reads, in one-letter code: NmrA-like family domain-containing protein DDB_G0286605 (302 aa).

NADP(+) contacts are provided by residues 9-14, 35-39, 56-57, 78-80, lysine 130, and 157-160; these read GGTGYQ, RNPES, DE, TNS, and YFQN.

This sequence belongs to the NmrA-type oxidoreductase family.

May be a redox sensor protein. In Dictyostelium discoideum (Social amoeba), this protein is NmrA-like family domain-containing protein DDB_G0286605.